A 688-amino-acid polypeptide reads, in one-letter code: Pentatricopeptide repeat-containing protein At3g18020 (688 aa).

PPR repeat units lie at residues 53–88 (DRAYWRRRIHSICAVRRNPDEALRILDGLCLRGYRP), 89–123 (DSLNLSSVIHSLCDAGRFDEAHRRFLLFLASGFIP), 124–158 (DERTCNVIIARLLYSRSPVSTLGVIHRLIGFKKEF), 161–195 (SLTNYNRLMNQLCTIYRVIDAHKLVFDMRNRGHLP), 196–230 (DVVTFTTLIGGYCEIRELEVAHKVFDEMRVCGIRP), 231–261 (NSLTLSVLIGGFLKMRDVETGRKLMKELWEY), 271–305 (KAAAFANLVDSMCREGYFNDIFEIAENMSLCESVN), 306–340 (VEFAYGHMIDSLCRYRRNHGAARIVYIMKSKGLKP), 341–375 (RRTSYNAIIHGLCKDGGCMRAYQLLEEGSEFEFFP), 376–406 (SEYTYKLLMESLCKELDTGKARNVLELMLRK), 411–445 (RTRIYNIYLRGLCVMDNPTEILNVLVSMLQGDCRP), 446–480 (DEYTLNTVINGLCKMGRVDDAMKVLDDMMTGKFCA), 482–517 (DAVTLNTVMCGLLAQGRAEEALDVLNRVMPENKIKP), 518–552 (GVVAYNAVIRGLFKLHKGDEAMSVFGQLEKASVTA), 553–583 (DSTTYAIIIDGLCVTNKVDMAKKFWDDVIWP), 588–622 (DAFVYAAFLKGLCQSGYLSDACHFLYDLADSGAIP), and 623–657 (NVVCYNTVIAECSRSGLKREAYQILEEMRKNGQAP).

It belongs to the PPR family. P subfamily.

This Arabidopsis thaliana (Mouse-ear cress) protein is Pentatricopeptide repeat-containing protein At3g18020.